The primary structure comprises 570 residues: Putative ABC transporter ATP-binding protein SAR2766 (570 aa).

ABC transporter domains follow at residues 6 to 247 and 304 to 537; these read ISFK…GIRE and LELN…ASLR. ATP is bound by residues 40–47 and 338–345; these read GASGSGKS and GHNGAGKS.

This sequence belongs to the ABC transporter superfamily.

The protein resides in the cell membrane. Probably part of an ABC transporter complex. Responsible for energy coupling to the transport system. This Staphylococcus aureus (strain MRSA252) protein is Putative ABC transporter ATP-binding protein SAR2766.